The following is a 373-amino-acid chain: Forkhead box protein E1 (373 aa).

Residues 19–51 (KEERGETAAGAGVPGEATGRGAGGRRRKRPLQR) are disordered. Residues 41-50 (GGRRRKRPLQ) show a composition bias toward basic residues. Residues 53-147 (KPPYSYIALI…ESGSFLRRRK (95 aa)) constitute a DNA-binding region (fork-head).

Post-translationally, phosphorylated. Detected in adult brain, placenta, lung, liver, skeletal muscle, kidney, pancreas, heart, colon, small intestine testis and thymus. Expression was strongest in heart and pancreas.

Its subcellular location is the nucleus. In terms of biological role, transcription factor that binds consensus sites on a variety of gene promoters and activate their transcription. Involved in proper palate formation, most probably through the expression of MSX1 and TGFB3 genes which are direct targets of this transcription factor. Also implicated in thyroid gland morphogenesis. May indirectly play a role in cell growth and migration through the regulation of WNT5A expression. In Homo sapiens (Human), this protein is Forkhead box protein E1 (FOXE1).